We begin with the raw amino-acid sequence, 366 residues long: Terpene cyclase-like protein flvF (366 aa).

It belongs to the terpene synthase family. As to quaternary structure, homodimer.

The catalysed reaction is N,N-dimethyl-cadaverine + 2,6,9-trimethyl-13-oxatetracyclo[6.3.1.1(6,9).0(1,5)]tridecane carbocation = pre-flavunoidine + H(+). It functions in the pathway secondary metabolite biosynthesis; terpenoid biosynthesis. Terpene cyclase-like protein; part of the gene cluster that mediates the biosynthesis of flavunoidine, an alkaloidal terpenoid with a tetracyclic cage-like core connected to dimethylcadaverine via a C-N bond and acylated with 5,5-dimethyl-L-pipecolate. The tetracyclic core is synthesized by the terpene cyclase flvE and the cytochrome P450 monooxygenase flvD. The terpene cyclase flvE catalyzes the cyclization of farnesyl pyrophosphate (FPP) to form (1R,4R,5S)-(+)-acoradiene and the cytochrome P450 monooxygenase flvD is then responsible for oxidative conversion of (1R,4R,5S)-(+)-acoradiene into the tetracyclic cage present in the final product flavunoidine. In parallel, the N-methyltransferase flvH dimethylates L-lysine to give N,N-dimethyl-L-Lysin which is decarboxylated by flvG to afford dimethylcadaverine. The terpene cyclase-like protein flvF is the enzyme that attaches the dimethylcadaverine precusor at the C-7 of the tetracyclic cage to yield pre-flavunoidine. The cytochrome monooxygenase flvC hydroxylates the C-10 position of pre-flavunoidine whereas the NRPS flvI acylates the terpenoid core at the hydroxylated C-10 with dimethylpipecolate to yield final flavunoidine. The bifunctional enzyme flvA and the dehydrogenase flvB are responsible for the synthesis of the dimethylpipecolate precursor. The PLP-dependent lyase domain of flvA might use L-O-acetyl-homoserine and alpha-keto-isovalerate to form an intermediary ketone that can cyclize intramolecularly to yield an imine. The imine can be reduced by flvB to yield the 6-carboxylated pipecolate. The C-terminal alpha-KG-dependent oxygenase domain of flvA is then proposed to catalyze the decarboxylation to yield dimethylpipecolate. The sequence is that of Terpene cyclase-like protein flvF from Aspergillus flavus (strain ATCC 200026 / FGSC A1120 / IAM 13836 / NRRL 3357 / JCM 12722 / SRRC 167).